A 256-amino-acid polypeptide reads, in one-letter code: MLEKFSKWKGNRSNHTTPSHSLDESAIPKHVAIIMDGNGRWAKKKGLPRIAGHREGMKVINKIVRKAIDLKIEVLSLYAFSTENWKRPRTEVDYLLKLPERFLKLELPNLMEENVQVRIMGGLDTLPEHTAKAVTKAMEETKDNTGLILNFALNYGSRYEMVEAMKQVAKEVETGTLSSDAITEDVISRHLMTADLRDPDLLIRTSGEIRLSNFMLWQLAYSEFWFTDVLWPDFTEHHLTEAIAVYQKRARRYGGV.

The interval 1–22 (MLEKFSKWKGNRSNHTTPSHSL) is disordered. D36 is an active-site residue. D36 serves as a coordination point for Mg(2+). Substrate-binding positions include 37–40 (GNGR), W41, R49, H53, and 81–83 (STE). N84 (proton acceptor) is an active-site residue. Substrate-binding positions include W85, R87, R204, and 210–212 (RLS). E223 provides a ligand contact to Mg(2+).

It belongs to the UPP synthase family. Homodimer. Requires Mg(2+) as cofactor.

Its function is as follows. Catalyzes the condensation of isopentenyl diphosphate (IPP) with allylic pyrophosphates generating different type of terpenoids. The polypeptide is Isoprenyl transferase (Halalkalibacterium halodurans (strain ATCC BAA-125 / DSM 18197 / FERM 7344 / JCM 9153 / C-125) (Bacillus halodurans)).